Reading from the N-terminus, the 550-residue chain is Warthog protein 8 (550 aa).

A signal peptide spans 1–19 (MNYLLLVSGLLSVWQPVFG).

Belongs to the hedgehog family. The C-terminal domain displays an autoproteolysis activity.

It is found in the secreted. The protein resides in the cell surface. Its subcellular location is the cell membrane. It localises to the extracellular space. Intercellular signal essential for a variety of patterning events during development. This is Warthog protein 8 (wrt-8) from Caenorhabditis elegans.